The chain runs to 142 residues: Large ribosomal subunit protein uL13 (142 aa).

Belongs to the universal ribosomal protein uL13 family. Part of the 50S ribosomal subunit.

Functionally, this protein is one of the early assembly proteins of the 50S ribosomal subunit, although it is not seen to bind rRNA by itself. It is important during the early stages of 50S assembly. This chain is Large ribosomal subunit protein uL13, found in Shewanella frigidimarina (strain NCIMB 400).